A 116-amino-acid chain; its full sequence is UPF0342 protein RBAM_010030 (116 aa).

Belongs to the UPF0342 family.

The polypeptide is UPF0342 protein RBAM_010030 (Bacillus velezensis (strain DSM 23117 / BGSC 10A6 / LMG 26770 / FZB42) (Bacillus amyloliquefaciens subsp. plantarum)).